The sequence spans 104 residues: Nucleoid-associated protein DICTH_1981 (104 aa).

Positions 85–104 (KSAEKMGSLADGLPLPPGLF) are disordered.

The protein belongs to the YbaB/EbfC family. As to quaternary structure, homodimer.

It localises to the cytoplasm. The protein localises to the nucleoid. In terms of biological role, binds to DNA and alters its conformation. May be involved in regulation of gene expression, nucleoid organization and DNA protection. This Dictyoglomus thermophilum (strain ATCC 35947 / DSM 3960 / H-6-12) protein is Nucleoid-associated protein DICTH_1981.